The sequence spans 313 residues: Tagatose-6-phosphate kinase (313 aa).

It belongs to the carbohydrate kinase PfkB family. LacC subfamily.

The catalysed reaction is D-tagatofuranose 6-phosphate + ATP = D-tagatofuranose 1,6-bisphosphate + ADP + H(+). It participates in carbohydrate metabolism; D-tagatose 6-phosphate degradation; D-glyceraldehyde 3-phosphate and glycerone phosphate from D-tagatose 6-phosphate: step 1/2. The polypeptide is Tagatose-6-phosphate kinase (Enterococcus faecalis (strain ATCC 700802 / V583)).